We begin with the raw amino-acid sequence, 340 residues long: Phosphoribosylformylglycinamidine cyclo-ligase (340 aa).

This sequence belongs to the AIR synthase family.

Its subcellular location is the cytoplasm. It carries out the reaction 2-formamido-N(1)-(5-O-phospho-beta-D-ribosyl)acetamidine + ATP = 5-amino-1-(5-phospho-beta-D-ribosyl)imidazole + ADP + phosphate + H(+). It participates in purine metabolism; IMP biosynthesis via de novo pathway; 5-amino-1-(5-phospho-D-ribosyl)imidazole from N(2)-formyl-N(1)-(5-phospho-D-ribosyl)glycinamide: step 2/2. The chain is Phosphoribosylformylglycinamidine cyclo-ligase from Streptococcus pneumoniae (strain CGSP14).